The primary structure comprises 192 residues: Peptidyl-prolyl cis-trans isomerase 1 (192 aa).

A PPIase cyclophilin-type domain is found at 25-188 (FFDVSIGEEP…KTVTIADCGE (164 aa)).

This sequence belongs to the cyclophilin-type PPIase family.

The enzyme catalyses [protein]-peptidylproline (omega=180) = [protein]-peptidylproline (omega=0). In terms of biological role, PPIases accelerate the folding of proteins. It catalyzes the cis-trans isomerization of proline imidic peptide bonds in oligopeptides. The chain is Peptidyl-prolyl cis-trans isomerase 1 (cyn-1) from Caenorhabditis elegans.